We begin with the raw amino-acid sequence, 217 residues long: Protein DJ-1alpha (217 aa).

The active-site Nucleophile is the C133. C133 carries the post-translational modification Cysteine sulfinic acid (-SO2H); alternate.

As to expression, expressed in testis (at protein level).

The protein resides in the cytoplasm. The protein localises to the nucleus. Its subcellular location is the mitochondrion. Functionally, plays an important role in cell protection against oxidative stress and cell death acting as oxidative stress sensor. Does not play a role in methylglyoxal detoxification. The polypeptide is Protein DJ-1alpha (Drosophila melanogaster (Fruit fly)).